A 196-amino-acid chain; its full sequence is Probable peptidyl-prolyl cis-trans isomerase (196 aa).

The first 26 residues, 1 to 26, serve as a signal peptide directing secretion; the sequence is MSFIRSALAAAAFVALSIGAVQTASA. One can recognise a PPIase cyclophilin-type domain in the interval 29 to 194; that stretch reads PENTVILKLK…KIIKATIEAD (166 aa).

Belongs to the cyclophilin-type PPIase family.

It is found in the periplasm. The enzyme catalyses [protein]-peptidylproline (omega=180) = [protein]-peptidylproline (omega=0). Its function is as follows. PPIases accelerate the folding of proteins. It catalyzes the cis-trans isomerization of proline imidic peptide bonds in oligopeptides. In Brucella melitensis biotype 1 (strain ATCC 23456 / CCUG 17765 / NCTC 10094 / 16M), this protein is Probable peptidyl-prolyl cis-trans isomerase (ppi).